Reading from the N-terminus, the 361-residue chain is Prostaglandin E2 receptor EP2 subtype (361 aa).

Polar residues predominate over residues 1–10; the sequence is MGSISNNSGS. Positions 1-21 are disordered; that stretch reads MGSISNNSGSEDCESREWLPS. Over 1–23 the chain is Extracellular; the sequence is MGSISNNSGSEDCESREWLPSGE. The N-linked (GlcNAc...) asparagine glycan is linked to Asn-6. The helical transmembrane segment at 24–47 threads the bilayer; it reads SPAISSAMFSAGVLGNLIALALLA. Residues 48–65 lie on the Cytoplasmic side of the membrane; that stretch reads RRWRGDAGRRAGRGNSIS. The helical transmembrane segment at 66–91 threads the bilayer; the sequence is LFHVLVTELVFTDLLGTCLISPVVLA. At 92-111 the chain is on the extracellular side; it reads SYARNQTLMALEPERRACTY. A glycan (N-linked (GlcNAc...) asparagine) is linked at Asn-96. Cys-109 and Cys-187 are disulfide-bonded. The chain crosses the membrane as a helical span at residues 112–132; that stretch reads FAFAMTFFSLATMLMLFAMAL. The Cytoplasmic segment spans residues 133–151; that stretch reads ERYLSIGRPYFYQRHVTRR. A helical membrane pass occupies residues 152–176; the sequence is GGLAVLPTIYTVSLLFCSLPLLGYG. The Extracellular segment spans residues 177–198; the sequence is QYVQYCPGTWCFIRHGRTAYLQ. A helical transmembrane segment spans residues 199-223; the sequence is LYATLLLLLIVAVLACNFSVILNLI. The Cytoplasmic portion of the chain corresponds to 224–262; the sequence is RMHRRSGRSRCGPSLGSCRDGSGTRRRGERVSVAEETDH. The segment at 230–253 is disordered; the sequence is GRSRCGPSLGSCRDGSGTRRRGER. A helical membrane pass occupies residues 263–286; the sequence is LILLAIMTITFAICSLPFTIFAYM. A glycan (N-linked (GlcNAc...) asparagine) is linked at Asn-287. At 287–299 the chain is on the extracellular side; it reads NETSSRREKWDLQ. Residues 300–323 form a helical membrane-spanning segment; the sequence is ALRFLSINSIIDPWVFAIFRPPVL. Over 324-361 the chain is Cytoplasmic; it reads RLMRSVLCCRVSLRAQDATQTSCSIQSNASRLTFVDTS.

The protein belongs to the G-protein coupled receptor 1 family.

It localises to the cell membrane. In terms of biological role, receptor for prostaglandin E2 (PGE2). The activity of this receptor is mediated by G(s) proteins that stimulate adenylate cyclase. The subsequent raise in intracellular cAMP is responsible for the relaxing effect of this receptor on smooth muscle. The sequence is that of Prostaglandin E2 receptor EP2 subtype (PTGER2) from Canis lupus familiaris (Dog).